The sequence spans 144 residues: uncharacterized protein (144 aa).

A signal peptide spans 1–16 (MRKFLIVLLLPLLVLA).

This is an uncharacterized protein from Aquifex aeolicus (strain VF5).